Here is a 380-residue protein sequence, read N- to C-terminus: Queuine tRNA-ribosyltransferase (380 aa).

The Proton acceptor role is filled by Asp-96. Substrate contacts are provided by residues 96–100, Asp-150, Gln-193, and Gly-220; that span reads DSGGF. Positions 251-257 are RNA binding; it reads GVGAPDS. Asp-270 (nucleophile) is an active-site residue. Residues 275–279 are RNA binding; important for wobble base 34 recognition; it reads TRIAR. Zn(2+) is bound by residues Cys-308, Cys-310, Cys-313, and His-339.

It belongs to the queuine tRNA-ribosyltransferase family. As to quaternary structure, homodimer. Within each dimer, one monomer is responsible for RNA recognition and catalysis, while the other monomer binds to the replacement base PreQ1. The cofactor is Zn(2+).

It catalyses the reaction 7-aminomethyl-7-carbaguanine + guanosine(34) in tRNA = 7-aminomethyl-7-carbaguanosine(34) in tRNA + guanine. It participates in tRNA modification; tRNA-queuosine biosynthesis. Its function is as follows. Catalyzes the base-exchange of a guanine (G) residue with the queuine precursor 7-aminomethyl-7-deazaguanine (PreQ1) at position 34 (anticodon wobble position) in tRNAs with GU(N) anticodons (tRNA-Asp, -Asn, -His and -Tyr). Catalysis occurs through a double-displacement mechanism. The nucleophile active site attacks the C1' of nucleotide 34 to detach the guanine base from the RNA, forming a covalent enzyme-RNA intermediate. The proton acceptor active site deprotonates the incoming PreQ1, allowing a nucleophilic attack on the C1' of the ribose to form the product. After dissociation, two additional enzymatic reactions on the tRNA convert PreQ1 to queuine (Q), resulting in the hypermodified nucleoside queuosine (7-(((4,5-cis-dihydroxy-2-cyclopenten-1-yl)amino)methyl)-7-deazaguanosine). The chain is Queuine tRNA-ribosyltransferase from Streptococcus agalactiae serotype Ia (strain ATCC 27591 / A909 / CDC SS700).